The sequence spans 397 residues: P2X purinoceptor 3 (397 aa).

Residues 1-20 (MNCISDFFTYETTKSVVVKS) lie on the Cytoplasmic side of the membrane. The chain crosses the membrane as a helical span at residues 21–43 (WTIGIINRAVQLLIISYFVGWVF). The Extracellular portion of the chain corresponds to 44-322 (LHEKAYQVRD…AGKFNIIPTI (279 aa)). 2 residues coordinate ATP: K63 and K65. Intrachain disulfides connect C107–C153, C116–C137, and C122–C147. Mg(2+) is bound at residue E111. An N-linked (GlcNAc...) asparagine glycan is attached at N139. D158 lines the Mg(2+) pocket. D158 is a binding site for Ca(2+). N170 carries N-linked (GlcNAc...) asparagine glycosylation. ATP is bound at residue T172. N194 is a glycosylation site (N-linked (GlcNAc...) asparagine). 2 cysteine pairs are disulfide-bonded: C203–C213 and C247–C256. The ATP site is built by S275, N279, and R281. N290 carries N-linked (GlcNAc...) asparagine glycosylation. Residue K299 coordinates ATP. A helical membrane pass occupies residues 323–341 (ISSVAAFTSVGVGTVLCDI). At 342 to 397 (ILLNFLKGADHYKARKFEEVTETTLKGTASTNPVFTSDQATVEKQSTDSGAYSIGH) the chain is on the cytoplasmic side.

It belongs to the P2X receptor family. Homotrimer. Forms heterotrimer with P2RX2. Heterotrimeric P2RX2/3 has a ligand dose-response profile that is distinct from either homotrimeric P2RX2 or P2RX3.

It localises to the cell membrane. It carries out the reaction Ca(2+)(in) = Ca(2+)(out). The catalysed reaction is Na(+)(in) = Na(+)(out). With respect to regulation, has high sensitivity to ATP. Fast activation by external ATP. Exhibits rapid desensitization. Sensitives to the ATP agonist:alpha/beta-methylene-ATP. Subject to allosteric inhibition by AF-219. Mg(2+) and Ca(2+) slow deactivation of P2RX3. In terms of biological role, extracellular ATP-activated non-selective cation channel. Plays particularly important role in sensory neurons where its activation is critical for gustatory, nociceptive responses, visceral reflexes and sensory hypersensitization. The sequence is that of P2X purinoceptor 3 (P2rx3) from Mus musculus (Mouse).